A 147-amino-acid chain; its full sequence is MNNILVINGPNLNLLGKREPDIYGNITLENINQKIKLHFKNEDLKIHFFQSNEEGKIIDKIIESEKKYNAIVINPAAYSHYSIAILDAMRSINIPVVEVHLSNIYKREEYRKKSVTAEASLGVISGFGYYGYIMAIEFILNNLVREK.

Tyrosine 23 (proton acceptor) is an active-site residue. Residues asparagine 74, histidine 80, and aspartate 87 each contribute to the substrate site. Histidine 100 (proton donor) is an active-site residue. Residues 101-102 and arginine 111 each bind substrate; that span reads LS.

The protein belongs to the type-II 3-dehydroquinase family. Homododecamer.

The enzyme catalyses 3-dehydroquinate = 3-dehydroshikimate + H2O. It functions in the pathway metabolic intermediate biosynthesis; chorismate biosynthesis; chorismate from D-erythrose 4-phosphate and phosphoenolpyruvate: step 3/7. Catalyzes a trans-dehydration via an enolate intermediate. The chain is 3-dehydroquinate dehydratase from Clostridium botulinum (strain Okra / Type B1).